The following is a 144-amino-acid chain: Single-stranded DNA-binding protein 3 (144 aa).

In terms of domain architecture, SSB spans 1–103 (MNKVVLIGRL…IVAEEVQFLE (103 aa)). Polar residues predominate over residues 112–134 (MANDQFNNGNENGSMQLPDNNDI). A disordered region spans residues 112 to 144 (MANDQFNNGNENGSMQLPDNNDITPIDDGDIPF).

As to quaternary structure, homotetramer.

The polypeptide is Single-stranded DNA-binding protein 3 (ssb3) (Clostridium acetobutylicum (strain ATCC 824 / DSM 792 / JCM 1419 / IAM 19013 / LMG 5710 / NBRC 13948 / NRRL B-527 / VKM B-1787 / 2291 / W)).